A 692-amino-acid polypeptide reads, in one-letter code: Elongation factor G (692 aa).

In terms of domain architecture, tr-type G spans 9-284 (EKIRNIGIMA…AVVDYLPSPV (276 aa)). GTP is bound by residues 18–25 (AHIDAGKT), 82–86 (DTPGH), and 136–139 (NKMD).

This sequence belongs to the TRAFAC class translation factor GTPase superfamily. Classic translation factor GTPase family. EF-G/EF-2 subfamily.

The protein localises to the cytoplasm. In terms of biological role, catalyzes the GTP-dependent ribosomal translocation step during translation elongation. During this step, the ribosome changes from the pre-translocational (PRE) to the post-translocational (POST) state as the newly formed A-site-bound peptidyl-tRNA and P-site-bound deacylated tRNA move to the P and E sites, respectively. Catalyzes the coordinated movement of the two tRNA molecules, the mRNA and conformational changes in the ribosome. This chain is Elongation factor G, found in Neorickettsia sennetsu (strain ATCC VR-367 / Miyayama) (Ehrlichia sennetsu).